The following is a 250-amino-acid chain: NAD(P)H-quinone oxidoreductase subunit S, chloroplastic (250 aa).

Residues 1-48 (MATSSITIPTIRTPIHRSKFLGQTHQFSTVNRSVFPPPKQQSKLYQVK) constitute a chloroplast transit peptide. Lysine 52 participates in a covalent cross-link: Glycyl lysine isopeptide (Lys-Gly) (interchain with G-Cter in ubiquitin). Basic and acidic residues-rich tracts occupy residues 76 to 94 (QRNIEDEQETSKAENNETE) and 106 to 115 (VPEDGFEKEM). 2 disordered regions span residues 76–163 (QRNI…KPKA) and 222–250 (REKGPPGKNPKSCILEPLIEQMQKEEAAP). Positions 136 to 146 (NPPPPPPPPPA) are enriched in pro residues.

Part of the chloroplast NDH complex, composed of a mixture of chloroplast and nucleus encoded subunits. Component of the electron donor-binding subcomplex, at least composed of NDHS, NDHT and NDHU. Interacts with the NDH subcomplex A via the protein NDHT and NDHU. Arg-193 is the critical site for the high affinity binding of NDH to ferredoxin.

Its subcellular location is the plastid. It localises to the chloroplast thylakoid membrane. It catalyses the reaction a plastoquinone + NADH + (n+1) H(+)(in) = a plastoquinol + NAD(+) + n H(+)(out). The enzyme catalyses a plastoquinone + NADPH + (n+1) H(+)(in) = a plastoquinol + NADP(+) + n H(+)(out). Its function is as follows. NDH shuttles electrons from NAD(P)H:plastoquinone, via FMN and iron-sulfur (Fe-S) centers, to quinones in the photosynthetic chain and possibly in a chloroplast respiratory chain. The immediate electron acceptor for the enzyme in this species is believed to be plastoquinone. Couples the redox reaction to proton translocation, and thus conserves the redox energy in a proton gradient. Required for the efficient operation of ferredoxin-dependent plastoquinone reduction. Forms the electron donor-binding subcomplex in association with the NDHT and NDHU subunits. This chain is NAD(P)H-quinone oxidoreductase subunit S, chloroplastic, found in Arabidopsis thaliana (Mouse-ear cress).